The following is a 607-amino-acid chain: UvrABC system protein C (607 aa).

The GIY-YIG domain maps to 15-93; it reads SEPGVYCMLD…IKKYQPRYNI (79 aa). Residues 202-237 form the UVR domain; that stretch reads HEVIADLIKKMEAASQQLNFELAAKVRDQIMLLRKM.

It belongs to the UvrC family. In terms of assembly, interacts with UvrB in an incision complex.

It is found in the cytoplasm. In terms of biological role, the UvrABC repair system catalyzes the recognition and processing of DNA lesions. UvrC both incises the 5' and 3' sides of the lesion. The N-terminal half is responsible for the 3' incision and the C-terminal half is responsible for the 5' incision. The polypeptide is UvrABC system protein C (Pseudoalteromonas translucida (strain TAC 125)).